The primary structure comprises 176 residues: Transcription termination/antitermination protein NusG (176 aa).

The KOW domain occupies 125–149 (GEVVRVVEGPFANFTATVEEYDVEH).

The protein belongs to the NusG family.

Its function is as follows. Participates in transcription elongation, termination and antitermination. The chain is Transcription termination/antitermination protein NusG from Helicobacter pylori (strain J99 / ATCC 700824) (Campylobacter pylori J99).